The primary structure comprises 172 residues: Large ribosomal subunit protein bL17 (172 aa).

The span at leucine 140–proline 160 shows a compositional bias: basic and acidic residues. The disordered stretch occupies residues leucine 140–asparagine 172.

Belongs to the bacterial ribosomal protein bL17 family. Part of the 50S ribosomal subunit. Contacts protein L32.

The protein is Large ribosomal subunit protein bL17 of Leptospira biflexa serovar Patoc (strain Patoc 1 / Ames).